Here is a 292-residue protein sequence, read N- to C-terminus: MKDVNILVEALPYIKKFHEKKILIKYGGHAMIDEDAMSSTVRDTVLLKYVGMEPLIVHGGGPEISRSMDKLGKEPKFIKGLRVTDEETMEIIEMVLVGKISTDIVSQISYHDGKGISLSGKDSRLIFAHKKPVSKVTSESGGEEEIDLGLVGEIDCINTDLLEMFLKNNYIPVISPVGIADDGSSLNLNADTAAGEIASSVDAEKLIILTDVPGVLRDPNDPDSLIQRIKIDEVPDLIEEGVISGGMIPKIETCVKAIEDGVKSCHIIDGRKKHSLLLEIFTKNGIGTMIYK.

Residues 60 to 61 (GG), Arg82, and Asn187 contribute to the substrate site.

The protein belongs to the acetylglutamate kinase family. ArgB subfamily.

Its subcellular location is the cytoplasm. The catalysed reaction is N-acetyl-L-glutamate + ATP = N-acetyl-L-glutamyl 5-phosphate + ADP. Its pathway is amino-acid biosynthesis; L-arginine biosynthesis; N(2)-acetyl-L-ornithine from L-glutamate: step 2/4. Its function is as follows. Catalyzes the ATP-dependent phosphorylation of N-acetyl-L-glutamate. The protein is Acetylglutamate kinase of Methanobrevibacter smithii (strain ATCC 35061 / DSM 861 / OCM 144 / PS).